We begin with the raw amino-acid sequence, 385 residues long: WD repeat-containing protein 74 (385 aa).

6 WD repeats span residues 40–80 (RREE…FQGQ), 83–122 (CPGG…TSSD), 128–168 (RVGP…EPVF), 179–220 (DLRV…RRPV), 224–266 (TYGE…GCLK), and 267–306 (GLAG…GLEH). A Phosphoserine modification is found at Ser214. At Lys311 the chain carries N6-methyllysine. Residues 320–385 (SGRDNWEDEP…KKKRPGSTSP (66 aa)) form a required for nucleolar and nuclear location region. 2 disordered regions span residues 323-345 (DNWE…DTET) and 360-385 (LSGL…STSP). Ser361 carries the phosphoserine modification. The span at 372-385 (TRRRKKKRPGSTSP) shows a compositional bias: basic residues.

In terms of assembly, isoform 1 interacts (through WDR repeats) with NVL; the interaction is independent of RNA or pre-60S ribosome particles. Isoform 2 does not interact with NVL. Interacts with MTREX; the interaction dissociation in a late stage of rRNA synthesis is required for appropriate maturation of pre-60S particles and depends on the ATPase activity of NVL.

It localises to the nucleus. The protein localises to the nucleolus. In terms of biological role, regulatory protein of the MTREX-exosome complex involved in the synthesis of the 60S ribosomal subunit. Participates in an early cleavage of the pre-rRNA processing pathway in cooperation with NVL. Required for blastocyst formation, is necessary for RNA transcription, processing and/or stability during preimplantation development. The protein is WD repeat-containing protein 74 (WDR74) of Homo sapiens (Human).